The sequence spans 396 residues: MKFLYLFLFAVFAWTSDAIVRIPLKKFRSIRRTLSDSGLNVEQLLAGTNSLQHNQGFPSSNAPTPETLKNYMDAQYYGEIGLGTPVQMFTVVFDTGSSNLWLPSIHCSFTDIACLLHHKYNGAKSSTYVKNGTEFAIQYGSGSLSGYLSQDSCTIGDIVVEKQLFGEAIKQPGVAFIAAKFDGILGMAYPRISVDGVPPVFDMMMSQKKVEQNVFSFYLNRNPDTEPGGELLLGGTDPKYYTGDFNYVPVTRQAYWQIHMDGMSIGSQLTLCKDGCEAIVDTGTSLITGPPAEVRALQKAIGAIPLIQGEYMIDCKKVPTLPTISFNVGGKTYSLTGEQYVLKESQGGKTICLSGLMGLEIPPPAGPLWILGDVFIGQYYTVFDRESNRVGFAKST.

A signal peptide spans 1 to 18 (MKFLYLFLFAVFAWTSDA). The propeptide at 19–61 (IVRIPLKKFRSIRRTLSDSGLNVEQLLAGTNSLQHNQGFPSSN) is activation peptide. In terms of domain architecture, Peptidase A1 spans 76–393 (YYGEIGLGTP…DRESNRVGFA (318 aa)). Asp-94 is an active-site residue. Cysteines 107 and 114 form a disulfide. Residue Asn-131 is glycosylated (N-linked (GlcNAc...) asparagine). Residues Cys-272 and Cys-276 are joined by a disulfide bond. The active site involves Asp-281. A disulfide bridge connects residues Cys-315 and Cys-352.

It belongs to the peptidase A1 family. As to quaternary structure, monomer.

The protein resides in the lysosome. It catalyses the reaction Specificity similar to, but narrower than, that of pepsin A. Does not cleave the 4-Gln-|-His-5 bond in B chain of insulin.. With respect to regulation, inhibited by pepstatin. Its function is as follows. Acid protease active in intracellular protein breakdown. This Clupea harengus (Atlantic herring) protein is Cathepsin D (ctsd).